Here is a 337-residue protein sequence, read N- to C-terminus: Anthranilate phosphoribosyltransferase (337 aa).

5-phospho-alpha-D-ribose 1-diphosphate is bound by residues G80, 83-84, T88, 90-93, 108-116, and S120; these read GD, NIST, and KHGNRAVSS. Residue G80 participates in anthranilate binding. S92 is a binding site for Mg(2+). Residue N111 coordinates anthranilate. R166 contacts anthranilate. Mg(2+)-binding residues include D224 and E225.

This sequence belongs to the anthranilate phosphoribosyltransferase family. Homodimer. Mg(2+) serves as cofactor.

The enzyme catalyses N-(5-phospho-beta-D-ribosyl)anthranilate + diphosphate = 5-phospho-alpha-D-ribose 1-diphosphate + anthranilate. It functions in the pathway amino-acid biosynthesis; L-tryptophan biosynthesis; L-tryptophan from chorismate: step 2/5. Its function is as follows. Catalyzes the transfer of the phosphoribosyl group of 5-phosphorylribose-1-pyrophosphate (PRPP) to anthranilate to yield N-(5'-phosphoribosyl)-anthranilate (PRA). This Anaeromyxobacter sp. (strain K) protein is Anthranilate phosphoribosyltransferase.